We begin with the raw amino-acid sequence, 218 residues long: 2-phospho-L-lactate guanylyltransferase (218 aa).

This sequence belongs to the CofC family. Homodimer.

It catalyses the reaction (2S)-2-phospholactate + GTP + H(+) = (2S)-lactyl-2-diphospho-5'-guanosine + diphosphate. The protein operates within cofactor biosynthesis; coenzyme F420 biosynthesis. Guanylyltransferase that catalyzes the activation of (2S)-2-phospholactate (2-PL) as (2S)-lactyl-2-diphospho-5'-guanosine, via the condensation of 2-PL with GTP. It is involved in the biosynthesis of coenzyme F420, a hydride carrier cofactor. The sequence is that of 2-phospho-L-lactate guanylyltransferase from Methanocaldococcus fervens (strain DSM 4213 / JCM 15782 / AG86) (Methanococcus fervens).